The sequence spans 157 residues: RxLR effector protein PITG_04049 (157 aa).

The N-terminal stretch at 1–23 (MRLIAGVLAGFLVICEVTSTSES) is a signal peptide. A RxLR-dEER motif is present at residues 51-65 (QFLRTDVVMNRGEER).

This sequence belongs to the RxLR effector family.

It localises to the secreted. It is found in the host cytoplasm. Its subcellular location is the host nucleus. Its function is as follows. Effector that might be involved in host plant infection. This is RxLR effector protein PITG_04049 from Phytophthora infestans (strain T30-4) (Potato late blight agent).